Consider the following 20-residue polypeptide: 26 kDa protein (20 aa).

The polypeptide is 26 kDa protein (Bacillus cereus).